We begin with the raw amino-acid sequence, 205 residues long: MLLIIQNGYITPYIYRYLDEDYEIIKSFNVDVTTMDLDKYSVVIILGGYQSVVDINKYSYLLKVIELIKKCLTVKKPLFGICLGFQLIAYALGCEIKSSGKLNVGYDTTILGYDNVFRCHIDYIIPNDSVEVLEYFDNMPYLYKHDNHVYGIQCHPDIAPECIKKYSNHIESYDYAAANKDSINKTNAIIIKYILNLLRDSIKKD.

A Glutamine amidotransferase type-1 domain is found at 1 to 176 (MLLIIQNGYI…SNHIESYDYA (176 aa)). Residues Cys-82, His-155, and Asp-157 each act as for GATase activity in the active site.

In Acanthamoeba polyphaga mimivirus (APMV), this protein is Putative glutamine amidotransferase-like protein L716.